The sequence spans 869 residues: Eukaryotic translation initiation factor 3 subunit C (869 aa).

Disordered regions lie at residues 1–92 (MSRF…KSAK) and 182–242 (IKKA…VGKG). A compositionally biased stretch (acidic residues) spans 14–55 (SSDEEEDLYSDDEEVQEQPEEESSEDDSEEDDDDDDDSDSSS). Residues 185-203 (ASKEHQKDIDSFRADKDAY) are compositionally biased toward basic and acidic residues. The region spanning 607–781 (FHMHINLELL…SSIIFRKGVE (175 aa)) is the PCI domain. The segment at 803 to 869 (NERTLETRTQ…ALGAAVGSRA (67 aa)) is disordered. Gly residues predominate over residues 823–843 (GRGGRGGNRGGRGGGRGGRGG).

This sequence belongs to the eIF-3 subunit C family. In terms of assembly, component of the eukaryotic translation initiation factor 3 (eIF-3) complex.

It localises to the cytoplasm. Its function is as follows. Component of the eukaryotic translation initiation factor 3 (eIF-3) complex, which is involved in protein synthesis of a specialized repertoire of mRNAs and, together with other initiation factors, stimulates binding of mRNA and methionyl-tRNAi to the 40S ribosome. The eIF-3 complex specifically targets and initiates translation of a subset of mRNAs involved in cell proliferation. The protein is Eukaryotic translation initiation factor 3 subunit C (nip1) of Botryotinia fuckeliana (strain B05.10) (Noble rot fungus).